The following is a 71-amino-acid chain: Large ribosomal subunit protein bL31 (71 aa).

The Zn(2+) site is built by C16, C18, C37, and C40.

This sequence belongs to the bacterial ribosomal protein bL31 family. Type A subfamily. In terms of assembly, part of the 50S ribosomal subunit. Zn(2+) serves as cofactor.

Binds the 23S rRNA. The chain is Large ribosomal subunit protein bL31 from Wigglesworthia glossinidia brevipalpis.